A 307-amino-acid polypeptide reads, in one-letter code: Ribosomal RNA small subunit methyltransferase A (307 aa).

Residues asparagine 35, valine 37, glycine 62, glutamate 83, aspartate 113, and asparagine 136 each contribute to the S-adenosyl-L-methionine site.

It belongs to the class I-like SAM-binding methyltransferase superfamily. rRNA adenine N(6)-methyltransferase family. RsmA subfamily.

The protein localises to the cytoplasm. It carries out the reaction adenosine(1518)/adenosine(1519) in 16S rRNA + 4 S-adenosyl-L-methionine = N(6)-dimethyladenosine(1518)/N(6)-dimethyladenosine(1519) in 16S rRNA + 4 S-adenosyl-L-homocysteine + 4 H(+). Its function is as follows. Specifically dimethylates two adjacent adenosines (A1518 and A1519) in the loop of a conserved hairpin near the 3'-end of 16S rRNA in the 30S particle. May play a critical role in biogenesis of 30S subunits. The chain is Ribosomal RNA small subunit methyltransferase A from Bifidobacterium longum subsp. infantis (strain ATCC 15697 / DSM 20088 / JCM 1222 / NCTC 11817 / S12).